Reading from the N-terminus, the 208-residue chain is Large ribosomal subunit protein uL3 (208 aa).

The tract at residues 117–149 is disordered; the sequence is GFQGAIKRHGQSRGPMAHGSRYHRRPGSMGPVA.

Belongs to the universal ribosomal protein uL3 family. Part of the 50S ribosomal subunit. Forms a cluster with proteins L14 and L19.

In terms of biological role, one of the primary rRNA binding proteins, it binds directly near the 3'-end of the 23S rRNA, where it nucleates assembly of the 50S subunit. The chain is Large ribosomal subunit protein uL3 from Exiguobacterium sp. (strain ATCC BAA-1283 / AT1b).